The sequence spans 267 residues: Mediator of RNA polymerase II transcription subunit 8 (267 aa).

Coiled coils occupy residues 2–27 (QQRE…KGSL) and 118–163 (VEEQ…EDRD). Positions 156-165 (NNPREDRDSE) are enriched in basic and acidic residues. Disordered regions lie at residues 156-180 (NNPR…NPAD) and 227-267 (ASGH…PYNR). Over residues 166–180 (TSALRQNKPSFNPAD) the composition is skewed to polar residues. Over residues 236–247 (GPVAPQQPGQPG) the composition is skewed to low complexity.

It belongs to the Mediator complex subunit 8 family. In terms of assembly, component of the Mediator complex. May be part of a multisubunit E3 ubiquitin-protein ligase complex.

Its subcellular location is the nucleus. Its pathway is protein modification; protein ubiquitination. Its function is as follows. Component of the Mediator complex, a coactivator involved in the regulated transcription of nearly all RNA polymerase II-dependent genes. Mediator functions as a bridge to convey information from gene-specific regulatory proteins to the basal RNA polymerase II transcription machinery. Mediator is recruited to promoters by direct interactions with regulatory proteins and serves as a scaffold for the assembly of a functional preinitiation complex with RNA polymerase II and the general transcription factors. May play a role as a target recruitment subunit in E3 ubiquitin-protein ligase complexes and thus in ubiquitination and subsequent proteasomal degradation of target proteins. This chain is Mediator of RNA polymerase II transcription subunit 8 (med8), found in Danio rerio (Zebrafish).